The following is a 715-amino-acid chain: Fatty acid oxidation complex subunit alpha (715 aa).

Positions 1–190 are enoyl-CoA hydratase; sequence MTTTSAFMLN…KAGLVDDVVP (190 aa). The interval 306–714 is 3-hydroxyacyl-CoA dehydrogenase; sequence GPLNSVGILG…FWTNGETDQG (409 aa).

This sequence in the N-terminal section; belongs to the enoyl-CoA hydratase/isomerase family. The protein in the central section; belongs to the 3-hydroxyacyl-CoA dehydrogenase family. Heterotetramer of two alpha chains (FadJ) and two beta chains (FadI).

The protein resides in the cytoplasm. It catalyses the reaction a (3S)-3-hydroxyacyl-CoA = a (2E)-enoyl-CoA + H2O. The catalysed reaction is a 4-saturated-(3S)-3-hydroxyacyl-CoA = a (3E)-enoyl-CoA + H2O. The enzyme catalyses a (3S)-3-hydroxyacyl-CoA + NAD(+) = a 3-oxoacyl-CoA + NADH + H(+). It carries out the reaction (3S)-3-hydroxybutanoyl-CoA = (3R)-3-hydroxybutanoyl-CoA. It functions in the pathway lipid metabolism; fatty acid beta-oxidation. Catalyzes the formation of a hydroxyacyl-CoA by addition of water on enoyl-CoA. Also exhibits 3-hydroxyacyl-CoA epimerase and 3-hydroxyacyl-CoA dehydrogenase activities. In Salmonella choleraesuis (strain SC-B67), this protein is Fatty acid oxidation complex subunit alpha.